The primary structure comprises 325 residues: Peroxidase 45 (325 aa).

The first 25 residues, 1–25, serve as a signal peptide directing secretion; sequence MEKNTSQTIFSNFFLLLLLSSCVSA. 4 disulfides stabilise this stretch: Cys36–Cys115, Cys69–Cys74, Cys121–Cys321, and Cys200–Cys232. Catalysis depends on His67, which acts as the Proton acceptor. Ca(2+) is bound by residues Asp68, Val71, Gly73, Asp75, and Ser77. Pro163 is a binding site for substrate. Heme b is bound at residue His193. Thr194 serves as a coordination point for Ca(2+). Asp245, Ser248, and Asp253 together coordinate Ca(2+).

Belongs to the peroxidase family. Classical plant (class III) peroxidase subfamily. Heme b serves as cofactor. Requires Ca(2+) as cofactor. In terms of tissue distribution, slightly expressed in roots.

It is found in the secreted. It carries out the reaction 2 a phenolic donor + H2O2 = 2 a phenolic radical donor + 2 H2O. Its function is as follows. Removal of H(2)O(2), oxidation of toxic reductants, biosynthesis and degradation of lignin, suberization, auxin catabolism, response to environmental stresses such as wounding, pathogen attack and oxidative stress. These functions might be dependent on each isozyme/isoform in each plant tissue. The sequence is that of Peroxidase 45 (PER45) from Arabidopsis thaliana (Mouse-ear cress).